Reading from the N-terminus, the 244-residue chain is Methylthioribulose-1-phosphate dehydratase (244 aa).

Substrate is bound at residue C89. Positions 107 and 109 each coordinate Zn(2+). The active-site Proton donor/acceptor is E130. Residue H192 participates in Zn(2+) binding.

Belongs to the aldolase class II family. MtnB subfamily. Requires Zn(2+) as cofactor.

It localises to the cytoplasm. The enzyme catalyses 5-(methylsulfanyl)-D-ribulose 1-phosphate = 5-methylsulfanyl-2,3-dioxopentyl phosphate + H2O. The protein operates within amino-acid biosynthesis; L-methionine biosynthesis via salvage pathway; L-methionine from S-methyl-5-thio-alpha-D-ribose 1-phosphate: step 2/6. Its function is as follows. Catalyzes the dehydration of methylthioribulose-1-phosphate (MTRu-1-P) into 2,3-diketo-5-methylthiopentyl-1-phosphate (DK-MTP-1-P). This chain is Methylthioribulose-1-phosphate dehydratase, found in Saccharomyces cerevisiae (strain YJM789) (Baker's yeast).